The primary structure comprises 271 residues: 1,4-dihydroxy-2-naphthoyl-CoA synthase (271 aa).

Substrate-binding positions include 71–75, Y83, 115–119, T141, S147, Y244, and K259; these read SGGDQ and YAIGG. 140–142 is a binding site for hydrogencarbonate; it reads QTG. A compositionally biased stretch (basic and acidic residues) spans 250 to 263; sequence KEGRDSFKEKRKPD. Residues 250 to 271 are disordered; it reads KEGRDSFKEKRKPDFGQFPRFP.

This sequence belongs to the enoyl-CoA hydratase/isomerase family. MenB subfamily. Requires hydrogencarbonate as cofactor.

It catalyses the reaction 2-succinylbenzoyl-CoA + H(+) = 1,4-dihydroxy-2-naphthoyl-CoA + H2O. Its pathway is quinol/quinone metabolism; 1,4-dihydroxy-2-naphthoate biosynthesis; 1,4-dihydroxy-2-naphthoate from chorismate: step 6/7. It functions in the pathway quinol/quinone metabolism; menaquinone biosynthesis. Converts o-succinylbenzoyl-CoA (OSB-CoA) to 1,4-dihydroxy-2-naphthoyl-CoA (DHNA-CoA). This chain is 1,4-dihydroxy-2-naphthoyl-CoA synthase, found in Bacillus subtilis (strain 168).